The sequence spans 224 residues: Ion-translocating oxidoreductase complex subunit E (224 aa).

The next 5 helical transmembrane spans lie at leucine 51–phenylalanine 71, isoleucine 81–alanine 101, serine 105–glycine 125, methionine 140–isoleucine 160, and histidine 194–isoleucine 214.

This sequence belongs to the NqrDE/RnfAE family. In terms of assembly, the complex is composed of six subunits: RnfA, RnfB, RnfC, RnfD, RnfE and RnfG.

The protein localises to the cell inner membrane. Its function is as follows. Part of a membrane-bound complex that couples electron transfer with translocation of ions across the membrane. The protein is Ion-translocating oxidoreductase complex subunit E of Pasteurella multocida (strain Pm70).